The primary structure comprises 89 residues: Small ribosomal subunit protein uS15 (89 aa).

Residues methionine 1 to aspartate 21 show a composition bias toward basic and acidic residues. The tract at residues methionine 1–glutamate 26 is disordered.

It belongs to the universal ribosomal protein uS15 family. In terms of assembly, part of the 30S ribosomal subunit. Forms a bridge to the 50S subunit in the 70S ribosome, contacting the 23S rRNA.

Its function is as follows. One of the primary rRNA binding proteins, it binds directly to 16S rRNA where it helps nucleate assembly of the platform of the 30S subunit by binding and bridging several RNA helices of the 16S rRNA. In terms of biological role, forms an intersubunit bridge (bridge B4) with the 23S rRNA of the 50S subunit in the ribosome. The sequence is that of Small ribosomal subunit protein uS15 from Erythrobacter litoralis (strain HTCC2594).